The primary structure comprises 330 residues: Putative heme-binding peroxidase (330 aa).

Catalysis depends on H38, which acts as the Proton acceptor. A heme b-binding site is contributed by H162. Residue W178 is the Tryptophan radical intermediate of the active site. Positions 286 to 330 (GEYKSAPQKSPVPGAPGAGKDGEANPLARQNERAHGQAQHALAKL) are disordered.

It belongs to the peroxidase family. Cytochrome c peroxidase subfamily. It depends on heme b as a cofactor.

In terms of biological role, destroys radicals which are normally produced within the cells and which are toxic to biological systems. The sequence is that of Putative heme-binding peroxidase (CCP2) from Mycosarcoma maydis (Corn smut fungus).